An 853-amino-acid chain; its full sequence is MNAYEGDTLNNHGKSSTRQHWRKRSAVSSSLEFSSYEESNSPIENTEVLKVSEIEAKKRRRKKHRYIYLAVCLFFLASVLSCAIIFRFYLHTNRENFSLFKNDSYKQKEPITVSHFGESIFLPYHQDIEWITSTEGTVLYYDQSTFSLSLFYPDGKEYGSNVDSLITSFVLTCKNLHRKRYSSDMEYIAFSCSKDRRWRHSYYEDVYLVERATGRIEHLASDQSKKIVVAEWSPIGHKLVYGLGSNLFIWESFSEPPVCITDQSDLDGLFNGNSDWVYEEEILQSSKAVWWSPDGNCLSYLSIDDSKVPVHVLPFEQLDSKVEDQNRVNNFFHYSTPKDPIPFVKLFVNCFTDSGESIEVDSSFPLSTQHRYITDVAWAGNEKLMFVEVLRGNYERVTSLFDLSSRKTTIENTEVSEHPLALTSSLHLKYLSFESLGNLKERYVRQYFLSNKKRIAIYELDNPVPIYLTPVNISFLSDLYLINNTLYFTAISSGSPFSRVYRLCTKSLILSEINIQIGSGLFGIKVSNDQNYLLVNYLGPEIPKQFIYSIHEDKVSTSNDHSKNNLPSDSSSTSLGKVKLELCNSLETNEELIITKEKFAFPSVFFKVIKVKNITAYIQEIRPPNFNPRKRYPTVFHLYGAPQSALVTGKYEMDINELMASVYNFLVIKVDIVDISDVSGQHLFSDSHELIIKSWIELLRSYVDTPYIDRHRVGIWGWSFGGYLTLKILENADFIKTGAVVAPVTDWRYYDAYYSENLLGAYSKQTTAIYDKTAVHYSENFRKLCGLLVLHGTSDDNVHIENTMQLTKAMVEKGVYNYYPFIVPNANHEFSDPTDYTFLREKLSGHFHHALYC.

The tract at residues 1–26 (MNAYEGDTLNNHGKSSTRQHWRKRSA) is disordered. The Cytoplasmic portion of the chain corresponds to 1–65 (MNAYEGDTLN…AKKRRRKKHR (65 aa)). A compositionally biased stretch (basic residues) spans 15–25 (SSTRQHWRKRS). A helical; Signal-anchor for type II membrane protein transmembrane segment spans residues 66–86 (YIYLAVCLFFLASVLSCAIIF). The Lumenal portion of the chain corresponds to 87-853 (RFYLHTNREN…SGHFHHALYC (767 aa)). Asn-96, Asn-102, Asn-472, Asn-483, and Asn-613 each carry an N-linked (GlcNAc...) asparagine glycan. Catalysis depends on charge relay system residues Ser-719, Asp-795, and His-828.

This sequence belongs to the peptidase S9B family.

The protein resides in the vacuole membrane. This is Putative dipeptidyl aminopeptidase C14C4.15c from Schizosaccharomyces pombe (strain 972 / ATCC 24843) (Fission yeast).